The sequence spans 1411 residues: Alpha-latroinsectotoxin-Lt1a (1411 aa).

A propeptide spanning residues 1–35 (ACSSPEVSIFHFFVYAGSFVKNFKKMKGSSAISKR) is cleaved from the precursor. A helix H8 is the probable transmembrane region of the tetrameric pore inserted in the target cell membrane region spans residues 245-264 (ALYALFYGTETFISIMFYLV). 20 ANK repeats span residues 462–495 (DIHRDLYNAAQVPYAREALSISRTLIQNGANVSE), 499–528 (LGRGAIHAAASAGNYDVGELLLNKDINLLE), 533–562 (NGYTPLHIAADSNKNDFVMFLIGNNADVNV), 567–597 (DLFTPLHLAARRDLTDVTQTLIDITEIDLNA), 601–630 (SGFTPLHLSISSTSETAAILIRNTNAVINI), 634–663 (VGLTPLHLATLQNNLSVSKLLAGKGAYLND), 667–697 (NGMTPLHYAAMTGNLEMVDFLLNQQYININA), 702–732 (KKWTPLHLAILFKKNDVAERLLSDENLNIRL), 736–765 (GGINPLHLASATGNKQLVIELLAKNADVTR), 769–798 (KGFSALHLGIIGKNEEIPFFLVEKGANVND), 802–831 (SGVTPLHFAAGLGKANIFRLLLSRGADIKA), 835–864 (NSQMPIHEAVSNGHLEIVRILIEKDPSLMN), 869–898 (RNEYPFYLAVEKRYKDIFDYFVSKDANVNE), 902–931 (NGNTLLHLFSSTGELEVVQFLMQNGANFRL), 935–965 (ERKTFFDLAIENGRLNIVAFAVEKNKVNLQA), 968–999 (RGKTILYHAICDSAKYDKIEIVKYFIEKLNES), 1000–1029 (ECNPLHEAAAYAHLDLVKYFVQERGINPAE), 1080–1109 (QENTPITVAIFANKVSILNYLVGIGADPNQ), 1112–1142 (DGDPPLYIAARQGRFEIVRCLIEVHKVDINT), and 1146–1175 (ERFTALHAAARNDFMDVVKYLVRQGADVNA). The propeptide occupies 1196–1411 (QSSRFLRSGH…KVNSNVSQIK (216 aa)). The span at 1230–1249 (DKLTQQISSKGTRSDSNSTE) shows a compositional bias: polar residues. The segment at 1230–1254 (DKLTQQISSKGTRSDSNSTEGKMHS) is disordered. One copy of the ANK 21 repeat lies at 1331–1361 (NVHSKIYKAIMSGRRSVISEMLCSFAEEYSK).

This sequence belongs to the cationic peptide 01 (latrotoxin) family. 02 (alpha-latroinsectotoxin) subfamily. As to quaternary structure, homotetramer in membranes. Expressed by the venom gland.

Its subcellular location is the secreted. The protein localises to the target cell membrane. In terms of biological role, insecticidal presynaptic neurotoxin that induces massive neurotransmitter release at insect (but not vertebrate) neuromuscular junctions. Native toxin forms cation-permeable pores (with high permeability to calcium) in lipid membranes locust muscle membrane and artificial lipid bilayers. May bind to insect neurexin-1 homolog, insect adhesion G protein-coupled receptor L1 homolog, and insect receptor-type tyrosine-protein phosphatase S homolog, and induces neurotransmitter exocytosis both by forming tetrameric pores in membranes and signaling via G protein-coupled receptor. Oligomerization is a process independent of divalent cations. The toxin forms channels with 0.55-0.58 nm entrance diameter and a relatively small conductance in planar phospholipid membranes. This is Alpha-latroinsectotoxin-Lt1a from Latrodectus tredecimguttatus (Mediterranean black widow spider).